The following is a 307-amino-acid chain: tRNA dimethylallyltransferase (307 aa).

8–15 is an ATP binding site; that stretch reads GPTGSGKS. Residue 10–15 coordinates substrate; sequence TGSGKS. Residues 33-36 form an interaction with substrate tRNA region; that stretch reads DSLQ.

It belongs to the IPP transferase family. As to quaternary structure, monomer. Mg(2+) serves as cofactor.

It catalyses the reaction adenosine(37) in tRNA + dimethylallyl diphosphate = N(6)-dimethylallyladenosine(37) in tRNA + diphosphate. Functionally, catalyzes the transfer of a dimethylallyl group onto the adenine at position 37 in tRNAs that read codons beginning with uridine, leading to the formation of N6-(dimethylallyl)adenosine (i(6)A). The protein is tRNA dimethylallyltransferase of Solibacter usitatus (strain Ellin6076).